Reading from the N-terminus, the 502-residue chain is Galactose/methyl galactoside import ATP-binding protein MglA (502 aa).

ABC transporter domains are found at residues 10–245 (LEMT…VGRE) and 255–502 (NEPK…SRYL). Residue 42 to 49 (GENGAGKS) participates in ATP binding.

Belongs to the ABC transporter superfamily. Galactose/methyl galactoside importer (TC 3.A.1.2.3) family. As to quaternary structure, the complex is composed of one ATP-binding protein (MglA), two transmembrane proteins (MglC) and a solute-binding protein (MglB).

The protein resides in the cell inner membrane. It catalyses the reaction D-galactose(out) + ATP + H2O = D-galactose(in) + ADP + phosphate + H(+). The enzyme catalyses methyl beta-D-galactoside(out) + ATP + H2O = methyl beta-D-galactoside(in) + ADP + phosphate + H(+). In terms of biological role, part of the ABC transporter complex MglABC involved in galactose/methyl galactoside import. Responsible for energy coupling to the transport system. The chain is Galactose/methyl galactoside import ATP-binding protein MglA from Vibrio cholerae serotype O1 (strain ATCC 39315 / El Tor Inaba N16961).